A 286-amino-acid chain; its full sequence is MTDPESTAIDSVAAMATDHTEAPAHPLHKVLSFVRRSGRLDDRLQRAWDNYAGTYLLDIAAGNLLDVREGVTLDRALVESAWGNDNPLIVEIGTGQGENVVAAAAAHPETNFLALEVYDPGVAHTLLLAGKQGLTNIRVAQVNAPELFKVTAPGTAAEVWTFFPDPWPKKKHHKRRIVQEAMAGDIHRALAADGVWRIATDIEDYALHVHEVMDGLDGWKNLGSVTVSLPLEHVGKGNADLAADMPHADFTESERFEGRVLTNFEKKGLAAGRVIHDFTYQAVALH.

S-adenosyl-L-methionine-binding residues include Glu-91, Glu-116, Asn-143, and Asp-165. Asp-165 is an active-site residue. Substrate is bound by residues Lys-169, Asp-201, and 262–265 (TNFE).

The protein belongs to the class I-like SAM-binding methyltransferase superfamily. TrmB family.

The enzyme catalyses guanosine(46) in tRNA + S-adenosyl-L-methionine = N(7)-methylguanosine(46) in tRNA + S-adenosyl-L-homocysteine. The protein operates within tRNA modification; N(7)-methylguanine-tRNA biosynthesis. Its function is as follows. Catalyzes the formation of N(7)-methylguanine at position 46 (m7G46) in tRNA. This is tRNA (guanine-N(7)-)-methyltransferase from Bifidobacterium longum subsp. infantis (strain ATCC 15697 / DSM 20088 / JCM 1222 / NCTC 11817 / S12).